Here is a 429-residue protein sequence, read N- to C-terminus: Chordin-like protein 2 (429 aa).

The signal sequence occupies residues 1 to 25 (MVPEVRVLSSLLGLALLWFPLDSHA). VWFC domains are found at residues 31–96 (MFCL…PKCV) and 109–175 (KSCQ…QACK). N-linked (GlcNAc...) asparagine glycosylation occurs at Asn-114. Ser-182 is modified (phosphoserine; by FAM20C). Residues 182–224 (SDEEDSVQSLHGVRHPQDPCSSDAGRKRGPGTPAPTGLSAPLS) are disordered. A VWFC 3 domain is found at 250 to 315 (KACVHGGKTY…VAGKCCKICP (66 aa)).

Interacts with GDF5. May interact with BMP2, BMP4, BMP5, BMP6, BMP7 and INHBA. Phosphorylated by FAM20C in the extracellular medium. In terms of tissue distribution, highly expressed in uterus. Moderately expressed in heart, liver, prostate, testis and ovary. Weakly expressed in skeletal muscle, kidney, spleen, small intestine and colon. Expressed in the secretory epithelial cells of uterine endometrium, fallopian tubes, endocervical glands, bladder and prostate, as well as the transitional epithelium of the urinary bladder, and in bone osteoblasts (at protein level). In normal cartilage, expression was confined in a few chondrocytes in the superficial zone as well as in the middle zone. In diseased cartilage coming from osteoarthritic patients, expression was limited to the middle zone of chondrocytes. Isoform 1 and isoform 2 are expressed in fetal cerebellum and heart, while only isoform 2 is detected in fetal spleen. Isoform 2 present in plasma.

It localises to the secreted. It is found in the cytoplasm. May inhibit BMPs activity by blocking their interaction with their receptors. Has a negative regulator effect on the cartilage formation/regeneration from immature mesenchymal cells, by preventing or reducing the rate of matrix accumulation. Implicated in tumor angiogenesis. May play a role during myoblast and osteoblast differentiation, and maturation. The protein is Chordin-like protein 2 (CHRDL2) of Homo sapiens (Human).